The primary structure comprises 389 residues: Gustatory receptor 68a (389 aa).

Over Met-1 to Arg-42 the chain is Cytoplasmic. A helical transmembrane segment spans residues Leu-43–Ser-63. Residues Lys-64–Thr-82 lie on the Extracellular side of the membrane. A glycan (N-linked (GlcNAc...) asparagine) is linked at Asn-80. A helical membrane pass occupies residues Ile-83 to Ala-103. Topologically, residues Ser-104–Asn-133 are cytoplasmic. Residues Leu-134–His-154 traverse the membrane as a helical segment. Residues Tyr-155–Gln-164 lie on the Extracellular side of the membrane. The helical transmembrane segment at Ile-165–Leu-185 threads the bilayer. Residues Arg-186–Asn-236 lie on the Cytoplasmic side of the membrane. The chain crosses the membrane as a helical span at residues Ile-237–Thr-257. A glycan (N-linked (GlcNAc...) asparagine) is linked at Asn-258. Over Asn-258–Thr-281 the chain is Extracellular. A helical membrane pass occupies residues Ile-282–Ala-302. Over Cys-303–Ser-352 the chain is Cytoplasmic. A helical membrane pass occupies residues Ile-353–Ile-373. Residues Gln-374–Ala-389 are Extracellular-facing.

It belongs to the insect chemoreceptor superfamily. Gustatory receptor (GR) family. Gr21a subfamily. As to expression, expressed in chemosensory neurons of about 20 male-specific gustatory bristles in the forelegs. No expression is seen in the mechanosensory neurons. In larvae, expressed in the ventral pharyngeal sense organ.

The protein localises to the cell membrane. In terms of biological role, dsx-dependent essential component of pheromone-driven courtship behavior. Recognizes a female pheromone involved in the second step (tapping step) of the courtship display which is essential for efficient execution of the entire courtship sequence and timely mating. Required for detection of the male sex pheromone CH503 which is transferred from males to females during mating and inhibits courtship behavior by other males. Gr68a-expressing neurons in the male foreleg relay signals to the suboesophageal zone (SEZ) and courtship suppression is mediated by the release of the neuropeptide tachykinin from a cluster of 8-10 neurons in the SEZ. This chain is Gustatory receptor 68a (Gr68a), found in Drosophila melanogaster (Fruit fly).